The chain runs to 336 residues: Fructose-1,6-bisphosphatase class 1 (336 aa).

Mg(2+) is bound by residues E90, D112, L114, and D115. Residues 115-118, N207, and K273 each bind substrate; that span reads DGSS. Residue E279 coordinates Mg(2+).

It belongs to the FBPase class 1 family. In terms of assembly, homotetramer. Mg(2+) serves as cofactor.

The protein resides in the cytoplasm. The enzyme catalyses beta-D-fructose 1,6-bisphosphate + H2O = beta-D-fructose 6-phosphate + phosphate. The protein operates within carbohydrate biosynthesis; gluconeogenesis. This Xanthomonas euvesicatoria pv. vesicatoria (strain 85-10) (Xanthomonas campestris pv. vesicatoria) protein is Fructose-1,6-bisphosphatase class 1.